A 415-amino-acid polypeptide reads, in one-letter code: Casein kinase 1-like protein 3 (415 aa).

Residues 9 to 277 (YKLGRKIGGG…FLKRLFRDLF (269 aa)) enclose the Protein kinase domain. ATP-binding positions include 15-23 (IGGGSFGEI) and lysine 38. Residue aspartate 128 is the Proton acceptor of the active site. 2 stretches are compositionally biased toward polar residues: residues 303–314 (NQSQAVPGSSNP) and 373–415 (NMPS…SPEK). 2 disordered regions span residues 303–330 (NQSQ…GPNI) and 344–415 (NAIG…SPEK).

It belongs to the protein kinase superfamily. CK1 Ser/Thr protein kinase family. Casein kinase I subfamily. In terms of processing, slightly autophosphorylated. Expressed in seedlings, stems, leaves and flowers.

The protein resides in the cytoplasm. It is found in the nucleus. The enzyme catalyses L-seryl-[protein] + ATP = O-phospho-L-seryl-[protein] + ADP + H(+). The catalysed reaction is L-threonyl-[protein] + ATP = O-phospho-L-threonyl-[protein] + ADP + H(+). Protein kinase involved in blue light responses (e.g. hypocotyl elongation and flowering) by phosphorylating CRY2 to reduce its stability. The sequence is that of Casein kinase 1-like protein 3 from Arabidopsis thaliana (Mouse-ear cress).